The sequence spans 429 residues: Histidine--tRNA ligase (429 aa).

Belongs to the class-II aminoacyl-tRNA synthetase family. As to quaternary structure, homodimer.

Its subcellular location is the cytoplasm. It carries out the reaction tRNA(His) + L-histidine + ATP = L-histidyl-tRNA(His) + AMP + diphosphate + H(+). The chain is Histidine--tRNA ligase from Streptococcus pneumoniae serotype 19F (strain G54).